The sequence spans 310 residues: Apolipoprotein E (310 aa).

The signal sequence occupies residues 1 to 18 (MKALWAVLLATLLTGCLS). 8 repeat units span residues 72-93 (VLME…EQLG), 94-115 (PVAE…ARLG), 116-137 (ADME…TMLG), 138-159 (QSTE…KRLM), 160-181 (RDAE…EGAE), 182-203 (RGVS…QRTA), 204-225 (NLGA…DRLR), and 226-247 (GRLE…EHME). Positions 72-247 (VLMEDTMTEV…RLEEMREHME (176 aa)) are 8 X 22 AA approximate tandem repeats. Met135 is subject to Methionine sulfoxide. An LDL and other lipoprotein receptors binding region spans residues 150 to 160 (HLRKMRKRLMR). The interval 150-160 (HLRKMRKRLMR) is LDL receptor binding. Heparin is bound at residue 154 to 157 (MRKR). The tract at residues 202–282 (TANLGAGVAQ…GWFEPLVEDM (81 aa)) is lipid-binding and lipoprotein association. 221–228 (GDRLRGRL) lines the heparin pocket. The homooligomerization stretch occupies residues 258–310 (QQIRLQAEIFQARLKGWFEPLVEDMQRQLANLVEKIQASTNSVLSTSVPQENQ). Positions 270 to 282 (RLKGWFEPLVEDM) are specificity for association with VLDL.

It belongs to the apolipoprotein A1/A4/E family. As to quaternary structure, homotetramer. May interact with ABCA1; functionally associated with ABCA1 in the biogenesis of HDLs. May interact with APP/A4 amyloid-beta peptide; the interaction is extremely stable in vitro but its physiological significance is unclear. May interact with MAPT. May interact with MAP2. In the cerebrospinal fluid, interacts with secreted SORL1. Interacts with PMEL; this allows the loading of PMEL luminal fragment on ILVs to induce fibril nucleation. In terms of processing, APOE exists as multiple glycosylated and sialylated glycoforms within cells and in plasma. The extent of glycosylation and sialylation are tissue and context specific. Glycated in plasma VLDL. Post-translationally, phosphorylated by FAM20C in the extracellular medium.

It is found in the secreted. It localises to the extracellular space. The protein resides in the extracellular matrix. The protein localises to the extracellular vesicle. Its subcellular location is the endosome. It is found in the multivesicular body. APOE is an apolipoprotein, a protein associating with lipid particles, that mainly functions in lipoprotein-mediated lipid transport between organs via the plasma and interstitial fluids. APOE is a core component of plasma lipoproteins and is involved in their production, conversion and clearance. Apolipoproteins are amphipathic molecules that interact both with lipids of the lipoprotein particle core and the aqueous environment of the plasma. As such, APOE associates with chylomicrons, chylomicron remnants, very low density lipoproteins (VLDL) and intermediate density lipoproteins (IDL) but shows a preferential binding to high-density lipoproteins (HDL). It also binds a wide range of cellular receptors including the LDL receptor/LDLR, the LDL receptor-related proteins LRP1, LRP2 and LRP8 and the very low-density lipoprotein receptor/VLDLR that mediate the cellular uptake of the APOE-containing lipoprotein particles. Finally, APOE also has a heparin-binding activity and binds heparan-sulfate proteoglycans on the surface of cells, a property that supports the capture and the receptor-mediated uptake of APOE-containing lipoproteins by cells. A main function of APOE is to mediate lipoprotein clearance through the uptake of chylomicrons, VLDLs, and HDLs by hepatocytes. APOE is also involved in the biosynthesis by the liver of VLDLs as well as their uptake by peripheral tissues ensuring the delivery of triglycerides and energy storage in muscle, heart and adipose tissues. By participating in the lipoprotein-mediated distribution of lipids among tissues, APOE plays a critical role in plasma and tissues lipid homeostasis. APOE is also involved in two steps of reverse cholesterol transport, the HDLs-mediated transport of cholesterol from peripheral tissues to the liver, and thereby plays an important role in cholesterol homeostasis. First, it is functionally associated with ABCA1 in the biogenesis of HDLs in tissues. Second, it is enriched in circulating HDLs and mediates their uptake by hepatocytes. APOE also plays an important role in lipid transport in the central nervous system, regulating neuron survival and sprouting. The polypeptide is Apolipoprotein E (Apoe) (Grammomys surdaster (African woodland thicket rat)).